A 282-amino-acid polypeptide reads, in one-letter code: Bifunctional protein FolD (282 aa).

NADP(+) contacts are provided by residues 165 to 167 (GRG), Thr-192, and Val-233.

The protein belongs to the tetrahydrofolate dehydrogenase/cyclohydrolase family. As to quaternary structure, homodimer.

The enzyme catalyses (6R)-5,10-methylene-5,6,7,8-tetrahydrofolate + NADP(+) = (6R)-5,10-methenyltetrahydrofolate + NADPH. It catalyses the reaction (6R)-5,10-methenyltetrahydrofolate + H2O = (6R)-10-formyltetrahydrofolate + H(+). The protein operates within one-carbon metabolism; tetrahydrofolate interconversion. In terms of biological role, catalyzes the oxidation of 5,10-methylenetetrahydrofolate to 5,10-methenyltetrahydrofolate and then the hydrolysis of 5,10-methenyltetrahydrofolate to 10-formyltetrahydrofolate. This is Bifunctional protein FolD from Mycobacterium leprae (strain Br4923).